A 607-amino-acid chain; its full sequence is Siderophore iron transporter mirC (607 aa).

The next 12 helical transmembrane spans lie at 67-89 (LVIA…QTIM), 129-148 (VFGR…LGYI), 186-208 (SLLN…VWIG), 223-245 (WGYG…SLLL), 279-301 (IFGL…LAAN), 311-328 (IVAM…LPFW), 349-368 (TALA…YFSV), 388-410 (GRVT…ILIK), 417-436 (VYVT…MLLY), 446-468 (VLGT…QLGV), 481-503 (TAMF…GAVW), and 557-574 (LLVL…LSLL). Residues 584 to 593 (SESSDHDDAS) show a composition bias toward basic and acidic residues. The tract at residues 584-607 (SESSDHDDASPRNGLGPGERAKRT) is disordered.

Belongs to the major facilitator superfamily.

It localises to the membrane. In Emericella nidulans (strain FGSC A4 / ATCC 38163 / CBS 112.46 / NRRL 194 / M139) (Aspergillus nidulans), this protein is Siderophore iron transporter mirC (mirC).